Consider the following 1037-residue polypeptide: Cysteine-rich motor neuron 1 protein (1037 aa).

Positions 1–34 are cleaved as a signal peptide; that stretch reads MYLVAGGRGLAGCGHLSVSLLGLLLLLARSGTRA. Residues 35-112 form the IGFBP N-terminal domain; the sequence is LVCLPCDESK…EYEVGVCEDE (78 aa). Residues 35 to 940 are Extracellular-facing; it reads LVCLPCDESK…HPGEDSSLDS (906 aa). Cystine bridges form between C37-C60, C40-C62, C45-C63, C51-C66, C74-C90, and C84-C109. Positions 314–316 match the Cell attachment site motif; it reads RGD. N-linked (GlcNAc...) asparagine glycosylation occurs at N330. 2 VWFC domains span residues 334–391 and 401–457; these read PACV…PVCE and AGCY…PVCE. 4 consecutive Antistasin-like domains span residues 469–498, 505–532, 539–564, and 567–592; these read CGELSNCSLKEKDCVYGFKLDHNGCRTCQC, CLGLKRACTLDCPFGFLTDVHNCELCQC, CRPTMCDKFCPLGFLKNKHGCDICRC, and CPELPCSKICPLGFQQDSHGCLICKC. VWFC domains lie at 606 to 663, 677 to 735, 751 to 809, and 817 to 874; these read GTCL…PSCT, SICH…PQCT, SYCR…PYCL, and VVCH…PMCP. Residues 941-961 form a helical membrane-spanning segment; that stretch reads IVSVVVPIIICLSIIIAFLLI. Topologically, residues 962-1037 are cytoplasmic; the sequence is NQKKQWVPLL…LQADNFYQTV (76 aa). T1036 carries the phosphothreonine modification.

As to quaternary structure, interacts with BMP4 and BMP7. In terms of tissue distribution, expressed during embryonic development in brain, kidney, spinal cord, testis, lens, vibrissae, pinna, tooth primordia and in specific regions of the CNS. Expressed in adult lens. Displays male-specific expression in the fetal gonads with the strongest expression in the Sertoli cells of developing testis.

It localises to the membrane. Functionally, may play a role in CNS development by interacting with growth factors implicated in motor neuron differentiation and survival. May play a role in capillary formation and maintenance during angiogenesis. Modulates BMP activity by affecting its processing and delivery to the cell surface. The protein is Cysteine-rich motor neuron 1 protein (Crim1) of Mus musculus (Mouse).